Consider the following 1122-residue polypeptide: Adhesin P1 (1122 aa).

Positions 1-30 (MKKLIFKLSVGITPLALIGLGSFGLAVSGA) are cleaved as a signal peptide. Disordered stretches follow at residues 183-209 (AGDT…GGAV), 244-273 (DYNS…GGRT), and 544-563 (QNSG…NGNE). Residues 195 to 208 (AGGGSGSSAAGGGA) are compositionally biased toward gly residues. Residues 259-273 (LDSSESSESINGGRT) are compositionally biased toward polar residues. A helical membrane pass occupies residues 997-1021 (VLPVAISIPIIIIALALALGLGIGI). The disordered stretch occupies residues 1066-1122 (KTPQMLQANKKDGASSPSKPSAPAAKKPTGPTKPSAPGAKPTAPAKPKAPAPTKKIE). The segment covering 1079 to 1122 (ASSPSKPSAPAAKKPTGPTKPSAPGAKPTAPAKPKAPAPTKKIE) has biased composition (low complexity).

The protein belongs to the adhesin P1 family.

Its subcellular location is the cell membrane. Functionally, could be involved in cytadherence. This Mycoplasmoides gallisepticum (Mycoplasma gallisepticum) protein is Adhesin P1 (gapA).